A 1286-amino-acid chain; its full sequence is MNKAYSIIWSHSRQAWIVASELARGHGFVLAKNTLLVLAVVSTIGNAFAVNISGTVSSGGTVSSGETQIVYSGRGNSNATVNSGGTQIVNNGGKTTATTVNSSGSQNVGTSGATISTIVNSGGIQRVSSGGVASATNLSGGAQNIYNLGHASNTVIFSGGNQTIFSGGITDSTNISSGGQQRVSSGGVASNTTINSSGAQNILSEEGAISTHISSGGNQYISAGANATETIVNSGGFQRVNSGAVATGTVLSGGTQNVSSGGSAISTSVYNSGVQTVFAGATVTDTTVNSGGNQNISSGGIVSETTVNVSGTQNIYSGGSALSANIKGSQIVNSEGTAINTLVSDGGYQHIRNGGIASGTIVNQSGYVNISSGGYAESTIINSGGTLRVLSDGYARGTILNNSGRENVSNGGVSYNAMINTGGNQYIYSDGEATAAIVNTSGFQRINSGGTAPVQNSVVVTRTVSSAAKPFDAEVYSGGKQTVYLWRGIWYSNFLTAVWSMFPGTASGANVNLSGRLNAFAGNVVGTILNQEGRQYVYSGATATSTVGNNEGREYVLSGGITDGTVLNSGGLQAVSSGGKASATVINEGGAQFVYDGGQVTGTNIKNGGTIRVDSGASALNIALSSGGNLFTSTGATLPELTTMAALSVSQNHASNIVLENGGLLRVTSGGTATDTTVNSAGRLRIDDGGTINGTTTINADGIVAGTNIQNDGNFILNLAENYDFETELSGSGVLVKDNTGIMTYAGTLTQAQGVNVKNGGIIFDSAVVNADMAVNQNAYINISDQATINGSVNNNGSIVINNSIINGNITNDADLSFGTAKLLSATVNGSLVNNKNIILNPTKESAGNTLTVSNYTGTPGSVISLGGVLEGDNSLTDRLVVKGNTSGQSDIVYVNEDGSGGQTRDGINIISVEGNSDAEFSLKNRVVAGAYDYTLQKGNESGTDNKGWYLTSHLPTSDTRQYRPENGSYATNMALANSLFLMDLNERKQFRAMSDNTQPESASVWMKITGGISSGKLNDGQNKTTTNQFINQLGGDIYKFHAEQLGDFTLGIMGGYANAKGKTINYTSNKAARNTLDGYSVGVYGTWYQNGENATGLFAETWMQYNWFNASVKGDGLEEEKYNLNGLTASAGGGYNLNVHTWTSPEGITGEFWLQPHLQAVWMGVTPDTHQEDNGTVVQGAGKNNIQTKAGIRASWKVKSTLDKDTGRRFRPYIEANWIHNTHEFGVKMSDDSQLLSGSRNQGEIKTGIEGVITQNLSVNGGVAYQAGGHGSNAISGALGIKYSF.

Positions 1–49 (MNKAYSIIWSHSRQAWIVASELARGHGFVLAKNTLLVLAVVSTIGNAFA) are cleaved as a signal peptide. O-alpha-linked (glycero-D-manno-heptose) serine glycans are attached at residues S102, S111, and S116. Residue T154 is glycosylated (O-alpha-linked (glycero-D-manno-heptose) threonine). O-alpha-linked (glycero-D-manno-heptose) serine glycans are attached at residues S242, S252, S334, S391, S409, S539, S545, S558, S569, S576, S577, and S582. One can recognise an Autotransporter domain in the interval 998 to 1286 (TQPESASVWM…SGALGIKYSF (289 aa)). The chain crosses the membrane as a beta stranded span at residues 1006 to 1012 (WMKITGG). Residues 1013–1029 (ISSGKLNDGQNKTTTNQ) are Extracellular-facing. The beta stranded transmembrane segment at 1030 to 1040 (FINQLGGDIYK) threads the bilayer. Topologically, residues 1041 to 1047 (FHAEQLG) are periplasmic. A beta stranded membrane pass occupies residues 1048-1058 (DFTLGIMGGYA). Residues 1059–1079 (NAKGKTINYTSNKAARNTLDG) are Extracellular-facing. The chain crosses the membrane as a beta stranded span at residues 1080-1087 (YSVGVYGT). Over 1088-1097 (WYQNGENATG) the chain is Periplasmic. The beta stranded transmembrane segment at 1098-1108 (LFAETWMQYNW) threads the bilayer. The Extracellular portion of the chain corresponds to 1109 to 1126 (FNASVKGDGLEEEKYNLN). The chain crosses the membrane as a beta stranded span at residues 1127–1138 (GLTASAGGGYNL). The Periplasmic segment spans residues 1139-1152 (NVHTWTSPEGITGE). The beta stranded transmembrane segment at 1153 to 1164 (FWLQPHLQAVWM) threads the bilayer. The Extracellular segment spans residues 1165-1186 (GVTPDTHQEDNGTVVQGAGKNN). Residues 1187–1198 (IQTKAGIRASWK) traverse the membrane as a beta stranded segment. At 1199-1210 (VKSTLDKDTGRR) the chain is on the periplasmic side. A beta stranded transmembrane segment spans residues 1211-1221 (FRPYIEANWIH). Residues 1222–1242 (NTHEFGVKMSDDSQLLSGSRN) lie on the Extracellular side of the membrane. The beta stranded transmembrane segment at 1243 to 1253 (QGEIKTGIEGV) threads the bilayer. The Periplasmic portion of the chain corresponds to 1254 to 1259 (ITQNLS). The chain crosses the membrane as a beta stranded span at residues 1260 to 1267 (VNGGVAYQ). At 1268-1275 (AGGHGSNA) the chain is on the extracellular side. A beta stranded transmembrane segment spans residues 1276–1284 (ISGALGIKY). The Periplasmic segment spans residues 1285–1286 (SF).

Intercellular AIDA-AIDA interaction is responsible for bacterial autoaggregation. AIDA can also interact with antigen 43 (Ag43), and the resultant intercellular AIDA-Ag43 interaction causes cell aggregation. Glycosylated on serine residues by AHH and AAH2 in the cytoplasm. Glycosylated with an average of 19 heptose residues. Glycosylated with either ADP-L, D-heptose or ADP-D, D-heptose. Glycosylation is required for protein folding/stabilization and resistance to protease-mediated degradation. Glycosylation is required for bacteria adhesion to mammalian cells. Glycosylation is dispensable for cell outer membrane localization. Glycosylation is dispensable for AIDA-mediated cell-cell aggregation and induction of biofilm formation. Glycosylation is dispensable for interaction with Ag43.

It localises to the periplasm. It is found in the secreted. Its subcellular location is the cell surface. The protein localises to the cell outer membrane. Potent bacterial adhesin that mediates bacterial attachment to a broad variety of human and other mammalian cells. Has additional virulence properties, as it is capable of mediating bacterial autoaggregation via intercellular self-recognition and it is a highly efficient initiator of biofilm formation. This chain is Autotransporter adhesin AIDA-I (aidA), found in Escherichia coli.